The primary structure comprises 198 residues: Peroxiredoxin-2F, mitochondrial (198 aa).

A mitochondrion-targeting transit peptide spans 1–27 (MASALLRKATVGGSAAAAAARWASRGL). The Thioredoxin domain maps to 34 to 198 (SDIVSAAPGV…SGAEVILDQI (165 aa)). Residue C86 is the Cysteine sulfenic acid (-SOH) intermediate of the active site.

This sequence belongs to the peroxiredoxin family. Prx5 subfamily. As to quaternary structure, monomer.

The protein localises to the mitochondrion matrix. The enzyme catalyses [glutaredoxin]-dithiol + a hydroperoxide = [glutaredoxin]-disulfide + an alcohol + H2O. Thiol-specific peroxidase that catalyzes the reduction of hydrogen peroxide and organic hydroperoxides to water and alcohols, respectively. Plays a role in cell protection against oxidative stress by detoxifying peroxides. Reduces preferentially hydrogen peroxide rather than alkyl peroxides. May be involved in mitochondrial redox homeostasis. The polypeptide is Peroxiredoxin-2F, mitochondrial (PRXIIF) (Oryza sativa subsp. japonica (Rice)).